Reading from the N-terminus, the 383-residue chain is MQTWQLPEHIADVLPTNARQLESAREQLLALFRVHGYELVQPPLMEYAHSLLTHIDAGLSLKTILVTDRLSGRQLGIRADITPQVARIDAHLLSANQGINRLCYAGPVLHAQPDGLPNMREPLQAGAEMYGFADIRGDIELIDLMLKSMKIADMGKVLLSLGHIGIFRALSDAAHLDAGQSAALLALMQDKDTGSVEAQVKAWKLDGMWAKAFSLLPRLYGGREVLSDARGRLPDLSAVGGALDELQAVCDAFPDNEIHIDLSELRVDNYHTGLLYAAYAADFHDAVARGGRYDGLGGYFGRARPATGFSFDLRSFIGRLPAVERQPAVLVDAEDAEAAREAVEALREQGQCVVIDYGIGHNVSEELAGRLKKTDGVWQVVKR.

The protein belongs to the class-II aminoacyl-tRNA synthetase family. HisZ subfamily. Heteromultimer composed of HisG and HisZ subunits.

The protein localises to the cytoplasm. It participates in amino-acid biosynthesis; L-histidine biosynthesis; L-histidine from 5-phospho-alpha-D-ribose 1-diphosphate: step 1/9. In terms of biological role, required for the first step of histidine biosynthesis. May allow the feedback regulation of ATP phosphoribosyltransferase activity by histidine. The polypeptide is ATP phosphoribosyltransferase regulatory subunit (Neisseria gonorrhoeae (strain ATCC 700825 / FA 1090)).